The chain runs to 128 residues: Large ribosomal subunit protein bL20c (128 aa).

This sequence belongs to the bacterial ribosomal protein bL20 family.

The protein resides in the plastid. In terms of biological role, binds directly to 23S ribosomal RNA and is necessary for the in vitro assembly process of the 50S ribosomal subunit. It is not involved in the protein synthesizing functions of that subunit. The polypeptide is Large ribosomal subunit protein bL20c (rpl20) (Lathraea clandestina (Purple toothwort)).